Consider the following 145-residue polypeptide: Cell wall synthesis protein CwsA (145 aa).

A helical membrane pass occupies residues 104-124 (WIFAGIAAAILAGGAVAFSIV).

The protein belongs to the CwsA family.

The protein localises to the cell membrane. In terms of biological role, required for regulated cell division, cell wall synthesis and the maintenance of cell shape. This chain is Cell wall synthesis protein CwsA, found in Mycobacterium bovis (strain ATCC BAA-935 / AF2122/97).